Reading from the N-terminus, the 545-residue chain is Chaperonin GroEL (545 aa).

ATP-binding positions include 29-32, 86-90, glycine 413, 476-478, and aspartate 492; these read TLGP, DGTTT, and NAA.

It belongs to the chaperonin (HSP60) family. Forms a cylinder of 14 subunits composed of two heptameric rings stacked back-to-back. Interacts with the co-chaperonin GroES.

Its subcellular location is the cytoplasm. It carries out the reaction ATP + H2O + a folded polypeptide = ADP + phosphate + an unfolded polypeptide.. Functionally, together with its co-chaperonin GroES, plays an essential role in assisting protein folding. The GroEL-GroES system forms a nano-cage that allows encapsulation of the non-native substrate proteins and provides a physical environment optimized to promote and accelerate protein folding. The polypeptide is Chaperonin GroEL (Shouchella clausii (strain KSM-K16) (Alkalihalobacillus clausii)).